We begin with the raw amino-acid sequence, 365 residues long: UDP-N-acetylglucosamine--N-acetylmuramyl-(pentapeptide) pyrophosphoryl-undecaprenol N-acetylglucosamine transferase (365 aa).

Residues 20 to 22, Asn132, Arg168, Ser196, Ile253, and Gln298 each bind UDP-N-acetyl-alpha-D-glucosamine; that span reads TGG.

The protein belongs to the glycosyltransferase 28 family. MurG subfamily.

It localises to the cell inner membrane. It catalyses the reaction di-trans,octa-cis-undecaprenyl diphospho-N-acetyl-alpha-D-muramoyl-L-alanyl-D-glutamyl-meso-2,6-diaminopimeloyl-D-alanyl-D-alanine + UDP-N-acetyl-alpha-D-glucosamine = di-trans,octa-cis-undecaprenyl diphospho-[N-acetyl-alpha-D-glucosaminyl-(1-&gt;4)]-N-acetyl-alpha-D-muramoyl-L-alanyl-D-glutamyl-meso-2,6-diaminopimeloyl-D-alanyl-D-alanine + UDP + H(+). Its pathway is cell wall biogenesis; peptidoglycan biosynthesis. In terms of biological role, cell wall formation. Catalyzes the transfer of a GlcNAc subunit on undecaprenyl-pyrophosphoryl-MurNAc-pentapeptide (lipid intermediate I) to form undecaprenyl-pyrophosphoryl-MurNAc-(pentapeptide)GlcNAc (lipid intermediate II). The chain is UDP-N-acetylglucosamine--N-acetylmuramyl-(pentapeptide) pyrophosphoryl-undecaprenol N-acetylglucosamine transferase from Ralstonia nicotianae (strain ATCC BAA-1114 / GMI1000) (Ralstonia solanacearum).